The sequence spans 311 residues: Methionyl-tRNA formyltransferase (311 aa).

Position 112 to 115 (112 to 115 (SLLP)) interacts with (6S)-5,6,7,8-tetrahydrofolate.

Belongs to the Fmt family.

It carries out the reaction L-methionyl-tRNA(fMet) + (6R)-10-formyltetrahydrofolate = N-formyl-L-methionyl-tRNA(fMet) + (6S)-5,6,7,8-tetrahydrofolate + H(+). Functionally, attaches a formyl group to the free amino group of methionyl-tRNA(fMet). The formyl group appears to play a dual role in the initiator identity of N-formylmethionyl-tRNA by promoting its recognition by IF2 and preventing the misappropriation of this tRNA by the elongation apparatus. This chain is Methionyl-tRNA formyltransferase, found in Sinorhizobium fredii (strain NBRC 101917 / NGR234).